The following is a 249-amino-acid chain: 5'-nucleotidase SurE (249 aa).

A divalent metal cation contacts are provided by aspartate 9, aspartate 10, serine 40, and asparagine 92.

It belongs to the SurE nucleotidase family. A divalent metal cation is required as a cofactor.

It localises to the cytoplasm. The catalysed reaction is a ribonucleoside 5'-phosphate + H2O = a ribonucleoside + phosphate. Nucleotidase that shows phosphatase activity on nucleoside 5'-monophosphates. This Shewanella sediminis (strain HAW-EB3) protein is 5'-nucleotidase SurE.